A 425-amino-acid chain; its full sequence is Dihydroorotase (425 aa).

Residues His60 and His62 each coordinate Zn(2+). Residues 62-64 (HLR) and Asn94 each bind substrate. Residues Asp152, His179, and His232 each contribute to the Zn(2+) site. Asn278 contributes to the substrate binding site. Asp305 serves as a coordination point for Zn(2+). Asp305 is an active-site residue. His309 contributes to the substrate binding site.

This sequence belongs to the metallo-dependent hydrolases superfamily. DHOase family. Class I DHOase subfamily. The cofactor is Zn(2+).

The catalysed reaction is (S)-dihydroorotate + H2O = N-carbamoyl-L-aspartate + H(+). It functions in the pathway pyrimidine metabolism; UMP biosynthesis via de novo pathway; (S)-dihydroorotate from bicarbonate: step 3/3. In terms of biological role, catalyzes the reversible cyclization of carbamoyl aspartate to dihydroorotate. The protein is Dihydroorotase of Syntrophotalea carbinolica (strain DSM 2380 / NBRC 103641 / GraBd1) (Pelobacter carbinolicus).